We begin with the raw amino-acid sequence, 385 residues long: MSFGRLESQLRLKVFGRLQVIRQHLRMSNHTVKDGGCLLTKAGCAGVITLNRPKALNALNLGMIRQIYPQLKLWEEDPETYLVIIKGAGGKAFCAGGDIRAVTDAGKVGDRLAQDFFREEYILNNAIGTCKKPYVAVIDGITMGGGVGLSVHGHFRVASEKTLFAMPETAIGLFPDVGGGYFLPRLTGKLGLYLALTGFRLKGSDVQKAGIATHFVESEKLSSLEQDLVAMKSPSKENVADVLDSYQKKSYAAQDKPFVLAENMDKINSLFSGNTVEEIMENLKCDGSSFAMKQLQTLSTMSPTSLKITFRQLKEGASMSLQEVLTMEYRLSQACMNGHDFYEGVRAVLIDKDQKAKWKPESLEEVTEDYIDSCFTSLGSRDLKL.

The substrate site is built by Glu-120, Gly-145, Glu-168, and Asp-176.

It belongs to the enoyl-CoA hydratase/isomerase family.

The protein localises to the mitochondrion. It carries out the reaction 3-hydroxy-2-methylpropanoyl-CoA + H2O = 3-hydroxy-2-methylpropanoate + CoA + H(+). It participates in amino-acid degradation; L-valine degradation. Its function is as follows. Hydrolyzes 3-hydroxyisobutyryl-CoA (HIBYL-CoA), a saline catabolite. Has high activity toward isobutyryl-CoA. Could be an isobutyryl-CoA dehydrogenase that functions in valine catabolism. Also hydrolyzes 3-hydroxypropanoyl-CoA. In Xenopus laevis (African clawed frog), this protein is 3-hydroxyisobutyryl-CoA hydrolase, mitochondrial (hibch).